Here is a 558-residue protein sequence, read N- to C-terminus: N-terminal histidine N-methyltransferase (558 aa).

Topologically, residues 1 to 15 are cytoplasmic; that stretch reads MAPFRSIYEKDATKK. The chain crosses the membrane as a helical span at residues 16-32; that stretch reads LVVGAALLVLAAFYSYV. Over 33-49 the chain is Lumenal; that stretch reads FLLTLAPVYGSTPSHIF. A helical transmembrane segment spans residues 50 to 65; the sequence is HGYGVGIAGVAGWFSK. Over 66 to 77 the chain is Cytoplasmic; sequence DIVDRVSGRKAI. A helical membrane pass occupies residues 78-96; it reads YAIPVLAFFLPVVQYFVSQ. At 97–104 the chain is on the lumenal side; it reads QSSALGNP. The chain crosses the membrane as a helical span at residues 105 to 131; that stretch reads AGPIFTEVLALYPLVLLSVACAGKLVQ. The Cytoplasmic segment spans residues 132–145; the sequence is AGLNLQRHGDLVAE. Residues 146–169 form a helical membrane-spanning segment; sequence HIPLLGSYVIYSAGEHLIKAFLSR. Residues 170-172 are Lumenal-facing; sequence FIG. Residues 173-194 traverse the membrane as a helical segment; the sequence is STVLLSRAGLQILIAIFYAAAV. Residues 195 to 197 lie on the Cytoplasmic side of the membrane; sequence PSK. The helical transmembrane segment at 198–215 threads the bilayer; sequence ALLLAIPAFLFSVTSNTH. The Lumenal portion of the chain corresponds to 216-558; that stretch reads LPLGHTTTAL…VLPDRVWEGW (343 aa).

It belongs to the methyltransferase superfamily.

It is found in the endoplasmic reticulum membrane. It carries out the reaction L-histidyl-[protein] + S-adenosyl-L-methionine = N(tele)-methyl-L-histidyl-[protein] + S-adenosyl-L-homocysteine + H(+). In terms of biological role, protein-histidine N-methyltransferase that specifically mediates 3-methylhistidine (tele-methylhistidine) methylation at 'His-1', which protects the side-chain from oxidative damage. Methylates lytic polysaccharide monooxygenases (LPMOs) destined for secretion, including AN4702. In Emericella nidulans (strain FGSC A4 / ATCC 38163 / CBS 112.46 / NRRL 194 / M139) (Aspergillus nidulans), this protein is N-terminal histidine N-methyltransferase.